Here is a 67-residue protein sequence, read N- to C-terminus: SPbeta prophage-derived uncharacterized protein YopZ (67 aa).

Residues 1–40 (MTSEMQLQAQIDVIEKENKELRRRNEELGQTVECQNKQIV) are a coiled coil. A helical membrane pass occupies residues 44-66 (WRLLFFASSWIVYGIVSAIKYLW).

It localises to the cell membrane. This is SPbeta prophage-derived uncharacterized protein YopZ (yopZ) from Bacillus subtilis (strain 168).